A 261-amino-acid polypeptide reads, in one-letter code: Proliferating cell nuclear antigen (261 aa).

The interval 7–100 is interaction with NUDT15; it reads VQGSILKKVL…RAEDNADTLA (94 aa). N6-acetyllysine is present on residues Lys-14, Lys-77, and Lys-80. The DNA-binding element occupies 61 to 80; it reads RCDRNLAMGVNLTSMSKILK. Cys-135 and Cys-162 are joined by a disulfide. Lys-164 is covalently cross-linked (Glycyl lysine isopeptide (Lys-Gly) (interchain with G-Cter in SUMO2); alternate). Lys-164 participates in a covalent cross-link: Glycyl lysine isopeptide (Lys-Gly) (interchain with G-Cter in ubiquitin); alternate. Tyr-211 carries the phosphotyrosine; by EGFR modification. N6-acetyllysine is present on Lys-248. Lys-254 is covalently cross-linked (Glycyl lysine isopeptide (Lys-Gly) (interchain with G-Cter in SUMO2)).

This sequence belongs to the PCNA family. Homotrimer. Interacts with p300/EP300; the interaction occurs on chromatin in UV-irradiated damaged cells. Interacts with CREBBP (via transactivation domain and C-terminus); the interaction occurs on chromatin in UV-irradiated damaged cells. Directly interacts with POLD1, POLD3 and POLD4 subunits of the DNA polymerase delta complex, POLD3 being the major interacting partner; the interaction with POLD3 is inhibited by CDKN1A/p21(CIP1). Forms a complex with activator 1 heteropentamer in the presence of ATP. Interacts with EXO1, POLH, POLK, DNMT1, ERCC5, FEN1, CDC6 and POLDIP2. Interacts with POLB. Interacts with APEX2; this interaction is triggered by reactive oxygen species and increased by misincorporation of uracil in nuclear DNA. Forms a ternary complex with DNTTIP2 and core histone. Interacts with KCTD10 and PPP1R15A. Interacts with SMARCA5/SNF2H. Interacts with BAZ1B/WSTF; the interaction is direct and is required for BAZ1B/WSTF binding to replication foci during S phase. Interacts with HLTF and SHPRH. Interacts with NUDT15; this interaction is disrupted in response to UV irradiation and acetylation. Interacts with CDKN1A/p21(CIP1) and CDT1; interacts via their PIP-box which also recruits the DCX(DTL) complex. The interaction with CDKN1A inhibits POLD3 binding. Interacts with DDX11. Interacts with EGFR; positively regulates PCNA. Interacts with PARPBP. Interacts (when ubiquitinated) with SPRTN; leading to enhance RAD18-mediated PCNA ubiquitination. Interacts (when polyubiquitinated) with ZRANB3. Interacts with SMARCAD1. Interacts with CDKN1C. Interacts with PCLAF (via PIP-box). Interacts with RTEL1 (via PIP-box); the interaction is direct and essential for the suppression of telomere fragility. Interacts with FAM111A (via PIP-box); the interaction is direct and required for PCNA loading on chromatin binding. Interacts with LIG1. Interacts with SETMAR. Interacts with ANKRD17. Interacts with FBXO18/FBH1 (via PIP-box); the interaction recruits the DCX(DTL) complex and promotes ubiquitination and degradation of FBXO18/FBH1. Interacts with POLN. Interacts with SDE2 (via PIP-box); the interaction is direct and prevents ultraviolet light induced monoubiquitination. Component of the replisome complex composed of at least DONSON, MCM2, MCM7, PCNA and TICRR; interaction at least with PCNA occurs during DNA replication. Interacts with MAPK15; the interaction is chromatin binding dependent and prevents MDM2-mediated PCNA destruction by inhibiting the association of PCNA with MDM2. Interacts with PARP10 (via PIP-box). Interacts with DDI2. Interacts with HMCES (via PIP-box). Interacts with TRAIP (via PIP-box). Interacts with UHRF2. Interacts with ALKBH2; this interaction is enhanced during the S-phase of the cell cycle. Interacts with ATAD5; the interaction promotes USP1-mediated PCNA deubiquitination. Interacts with DNA damage up-regulated protein DDUP. Interacts (when phosphorylated) with GRB2. Interacts with ANG. Interacts with nuclear UNG (isoform 2); this interaction mediates UNG recruitment to S-phase replication foci. Interacts with ERCC6L2 (via an atypical PIP-box); this interaction facilitates cenrtomeric localization of ERCC6L2. As to quaternary structure, (Microbial infection) Interacts with herpes virus 8 protein LANA1. In terms of processing, phosphorylated. Phosphorylation at Tyr-211 by EGFR stabilizes chromatin-associated PCNA. Post-translationally, acetylated by CREBBP and p300/EP300; preferentially acetylated by CREBBP on Lys-80, Lys-13 and Lys-14 and on Lys-77 by p300/EP300 upon loading on chromatin in response to UV irradiation. Lysine acetylation disrupts association with chromatin, hence promoting PCNA ubiquitination and proteasomal degradation in response to UV damage in a CREBBP- and EP300-dependent manner. Acetylation disrupts interaction with NUDT15 and promotes degradation. Ubiquitinated. Following DNA damage, can be either monoubiquitinated to stimulate direct bypass of DNA lesions by specialized DNA polymerases or polyubiquitinated to promote recombination-dependent DNA synthesis across DNA lesions by template switching mechanisms. Following induction of replication stress, monoubiquitinated by the UBE2B-RAD18 complex on Lys-164, leading to recruit translesion (TLS) polymerases, which are able to synthesize across DNA lesions in a potentially error-prone manner. An error-free pathway also exists and requires non-canonical polyubiquitination on Lys-164 through 'Lys-63' linkage of ubiquitin moieties by the E2 complex UBE2N-UBE2V2 and the E3 ligases, HLTF, RNF8 and SHPRH. This error-free pathway, also known as template switching, employs recombination mechanisms to synthesize across the lesion, using as a template the undamaged, newly synthesized strand of the sister chromatid. Monoubiquitination at Lys-164 also takes place in undamaged proliferating cells, and is mediated by the DCX(DTL) complex, leading to enhance PCNA-dependent translesion DNA synthesis. Sumoylated during S phase. In terms of processing, methylated on glutamate residues by ARMT1/C6orf211.

It is found in the nucleus. Functionally, auxiliary protein of DNA polymerase delta and epsilon, is involved in the control of eukaryotic DNA replication by increasing the polymerase's processibility during elongation of the leading strand. Induces a robust stimulatory effect on the 3'-5' exonuclease and 3'-phosphodiesterase, but not apurinic-apyrimidinic (AP) endonuclease, APEX2 activities. Has to be loaded onto DNA in order to be able to stimulate APEX2. Plays a key role in DNA damage response (DDR) by being conveniently positioned at the replication fork to coordinate DNA replication with DNA repair and DNA damage tolerance pathways. Acts as a loading platform to recruit DDR proteins that allow completion of DNA replication after DNA damage and promote postreplication repair: Monoubiquitinated PCNA leads to recruitment of translesion (TLS) polymerases, while 'Lys-63'-linked polyubiquitination of PCNA is involved in error-free pathway and employs recombination mechanisms to synthesize across the lesion. The chain is Proliferating cell nuclear antigen (PCNA) from Homo sapiens (Human).